A 128-amino-acid chain; its full sequence is Fluoride-specific ion channel FluC (128 aa).

Helical transmembrane passes span 5–25, 34–54, 67–87, and 99–119; these read LFISCGAILGASLRWAIGLLF, FGTLIANLFGCLIIGVLLGLF, FLITGFLGSLTTFSSFSSEVV, and FCVLMMHLFGCLAMTVLGIWI. 2 residues coordinate Na(+): Gly-74 and Thr-77.

This sequence belongs to the fluoride channel Fluc/FEX (TC 1.A.43) family.

The protein localises to the cell inner membrane. The catalysed reaction is fluoride(in) = fluoride(out). Na(+) is not transported, but it plays an essential structural role and its presence is essential for fluoride channel function. Fluoride-specific ion channel. Important for reducing fluoride concentration in the cell, thus reducing its toxicity. The sequence is that of Fluoride-specific ion channel FluC from Haemophilus influenzae (strain PittGG).